We begin with the raw amino-acid sequence, 455 residues long: Bifunctional protein GlmU (455 aa).

A pyrophosphorylase region spans residues 1-227 (MGLSVIILAA…CEEVQGVNDR (227 aa)). UDP-N-acetyl-alpha-D-glucosamine is bound by residues 8-11 (LAAG), lysine 22, glutamine 73, 78-79 (GT), 100-102 (YGD), glycine 137, glutamate 152, asparagine 167, and asparagine 225. Residue aspartate 102 participates in Mg(2+) binding. Residue asparagine 225 coordinates Mg(2+). Residues 228 to 248 (WELTKLERYYQRLMAKKLSLA) form a linker region. Positions 249-455 (GVTIIDPERF…KGWHRPTKKE (207 aa)) are N-acetyltransferase. UDP-N-acetyl-alpha-D-glucosamine contacts are provided by arginine 332 and lysine 350. Histidine 362 acts as the Proton acceptor in catalysis. 2 residues coordinate UDP-N-acetyl-alpha-D-glucosamine: tyrosine 365 and asparagine 376. Acetyl-CoA-binding positions include alanine 379, 385-386 (NY), serine 404, alanine 422, and arginine 439.

It in the N-terminal section; belongs to the N-acetylglucosamine-1-phosphate uridyltransferase family. In the C-terminal section; belongs to the transferase hexapeptide repeat family. Homotrimer. Mg(2+) serves as cofactor.

The protein localises to the cytoplasm. The enzyme catalyses alpha-D-glucosamine 1-phosphate + acetyl-CoA = N-acetyl-alpha-D-glucosamine 1-phosphate + CoA + H(+). It catalyses the reaction N-acetyl-alpha-D-glucosamine 1-phosphate + UTP + H(+) = UDP-N-acetyl-alpha-D-glucosamine + diphosphate. It participates in nucleotide-sugar biosynthesis; UDP-N-acetyl-alpha-D-glucosamine biosynthesis; N-acetyl-alpha-D-glucosamine 1-phosphate from alpha-D-glucosamine 6-phosphate (route II): step 2/2. The protein operates within nucleotide-sugar biosynthesis; UDP-N-acetyl-alpha-D-glucosamine biosynthesis; UDP-N-acetyl-alpha-D-glucosamine from N-acetyl-alpha-D-glucosamine 1-phosphate: step 1/1. It functions in the pathway bacterial outer membrane biogenesis; LPS lipid A biosynthesis. In terms of biological role, catalyzes the last two sequential reactions in the de novo biosynthetic pathway for UDP-N-acetylglucosamine (UDP-GlcNAc). The C-terminal domain catalyzes the transfer of acetyl group from acetyl coenzyme A to glucosamine-1-phosphate (GlcN-1-P) to produce N-acetylglucosamine-1-phosphate (GlcNAc-1-P), which is converted into UDP-GlcNAc by the transfer of uridine 5-monophosphate (from uridine 5-triphosphate), a reaction catalyzed by the N-terminal domain. This is Bifunctional protein GlmU from Coxiella burnetii (strain CbuK_Q154) (Coxiella burnetii (strain Q154)).